The primary structure comprises 355 residues: S-adenosylmethionine:tRNA ribosyltransferase-isomerase (355 aa).

Belongs to the QueA family. As to quaternary structure, monomer.

Its subcellular location is the cytoplasm. The enzyme catalyses 7-aminomethyl-7-carbaguanosine(34) in tRNA + S-adenosyl-L-methionine = epoxyqueuosine(34) in tRNA + adenine + L-methionine + 2 H(+). It functions in the pathway tRNA modification; tRNA-queuosine biosynthesis. Transfers and isomerizes the ribose moiety from AdoMet to the 7-aminomethyl group of 7-deazaguanine (preQ1-tRNA) to give epoxyqueuosine (oQ-tRNA). This Gluconacetobacter diazotrophicus (strain ATCC 49037 / DSM 5601 / CCUG 37298 / CIP 103539 / LMG 7603 / PAl5) protein is S-adenosylmethionine:tRNA ribosyltransferase-isomerase.